The following is a 383-amino-acid chain: Acyl-CoA dehydrogenase, short-chain specific (383 aa).

Residue Glu367 is the Proton acceptor of the active site.

This sequence belongs to the acyl-CoA dehydrogenase family. As to quaternary structure, homotetramer. The cofactor is FAD.

The catalysed reaction is butanoyl-CoA + oxidized [electron-transfer flavoprotein] + H(+) = (2E)-butenoyl-CoA + reduced [electron-transfer flavoprotein]. It carries out the reaction a short-chain 2,3-saturated fatty acyl-CoA + oxidized [electron-transfer flavoprotein] + H(+) = a short-chain (2E)-enoyl-CoA + reduced [electron-transfer flavoprotein]. Functionally, has an optimum specificity for 4-carbon length fatty acyl-CoAs. The chain is Acyl-CoA dehydrogenase, short-chain specific from Megasphaera elsdenii.